Consider the following 99-residue polypeptide: Antitoxin VapB47 (99 aa).

The protein belongs to the phD/YefM antitoxin family.

Antitoxin component of a type II toxin-antitoxin (TA) system. This Mycobacterium tuberculosis (strain CDC 1551 / Oshkosh) protein is Antitoxin VapB47 (vapB47).